Here is a 159-residue protein sequence, read N- to C-terminus: Phosphopantetheine adenylyltransferase (159 aa).

Residue Ser-9 coordinates substrate. Residues 9–10 and His-17 contribute to the ATP site; that span reads SF. Substrate contacts are provided by Lys-41, Ile-75, and Lys-89. ATP-binding positions include 90–92, Glu-100, and 124–130; these read GLR and LEHISSS.

This sequence belongs to the bacterial CoaD family. Homohexamer. Mg(2+) is required as a cofactor.

Its subcellular location is the cytoplasm. It catalyses the reaction (R)-4'-phosphopantetheine + ATP + H(+) = 3'-dephospho-CoA + diphosphate. It participates in cofactor biosynthesis; coenzyme A biosynthesis; CoA from (R)-pantothenate: step 4/5. Functionally, reversibly transfers an adenylyl group from ATP to 4'-phosphopantetheine, yielding dephospho-CoA (dPCoA) and pyrophosphate. This is Phosphopantetheine adenylyltransferase from Bifidobacterium animalis subsp. lactis (strain AD011).